The sequence spans 423 residues: Galactosylceramide sulfotransferase (423 aa).

Topologically, residues 1–12 are cytoplasmic; the sequence is MTLLPKKPCKSK. A helical; Signal-anchor for type II membrane protein transmembrane segment spans residues 13–35; that stretch reads AKGLLLGALFTSFLLLLYSYVVP. The Lumenal segment spans residues 36–423; it reads PLYPNMAFTT…WKFLRDFLRW (388 aa). N-linked (GlcNAc...) asparagine glycans are attached at residues N66 and N312.

It belongs to the galactose-3-O-sulfotransferase family. As to expression, expressed in brain, testis, kidney, stomach, small intestine, liver, and lung. Not detected in heart, skeletal muscle, and spleen.

The protein localises to the golgi apparatus membrane. It catalyses the reaction a beta-D-galactosyl-(1&lt;-&gt;1')-N-acylsphing-4-enine + 3'-phosphoadenylyl sulfate = an N-acyl-1-beta-D-(3-O-sulfo)-galactosyl-sphing-4-enine + adenosine 3',5'-bisphosphate + H(+). The catalysed reaction is a 1-O-alkyl-2-acyl-3-O-(beta-D-galactosyl)-sn-glycerol + 3'-phosphoadenylyl sulfate = a 1-O-alkyl-2-acyl-3-(beta-D-3-sulfogalactosyl)-sn-glycerol + adenosine 3',5'-bisphosphate + H(+). The enzyme catalyses a beta-D-Gal-(1&lt;-&gt;1')-ceramide + 3'-phosphoadenylyl sulfate = 1-(3-O-sulfo-beta-D-galactosyl)-ceramide + adenosine 3',5'-bisphosphate + H(+). It carries out the reaction a 1,2-diacyl-3-O-(beta-D-galactosyl)-sn-glycerol + 3'-phosphoadenylyl sulfate = 1,2-diacyl-3-(3-O-sulfo-beta-D-galactosyl)-sn-glycerol + adenosine 3',5'-bisphosphate + H(+). It catalyses the reaction a beta-D-Gal-(1-&gt;4)-beta-D-Glc-(1&lt;-&gt;1)-Cer(d18:1(4E)) + 3'-phosphoadenylyl sulfate = beta-D-3-sulfogalactosyl-(1-&gt;4)-beta-D-glucosyl-(1&lt;-&gt;1')-N-acylsphing-4-enine + adenosine 3',5'-bisphosphate + H(+). The protein operates within lipid metabolism; sphingolipid metabolism. Its function is as follows. Catalyzes the transfer of a sulfate group to position 3 of non-reducing beta-galactosyl residues in glycerolipids and sphingolipids, therefore participates in the biosynthesis of sulfoglycolipids. Catalyzes the synthesis of galactosylceramide sulfate (sulfatide), a major lipid component of the myelin sheath and of monogalactosylalkylacylglycerol sulfate (seminolipid), present in spermatocytes. Seems to prefer beta-glycosides at the non-reducing termini of sugar chains attached to a lipid moiety. Also acts on lactosylceramide, galactosyl 1-alkyl-2-sn-glycerol and galactosyl diacylglycerol (in vitro). This is Galactosylceramide sulfotransferase from Mus musculus (Mouse).